Consider the following 705-residue polypeptide: Glycogen [starch] synthase isoform 2 (705 aa).

Arg20 provides a ligand contact to UDP. Ser159 carries the post-translational modification Phosphoserine. 2 residues coordinate UDP-alpha-D-glucose: His193 and Arg199. Alpha-D-glucose 6-phosphate-binding residues include His280, Glu281, Gln283, His286, and Lys290. Arg320 contacts UDP. Arg320 is a UDP-alpha-D-glucose binding site. A phosphoserine mark is found at Ser363 and Ser467. Residue His500 participates in alpha-D-glucose 6-phosphate binding. Residues Glu509, Trp511, and Gly512 each coordinate UDP-alpha-D-glucose. A UDP-binding site is contributed by Thr514. Arg583 and Arg587 together coordinate alpha-D-glucose 6-phosphate. Position 651 is a phosphoserine (Ser651). Ser655 is modified (phosphoserine; by PHO85). Phosphoserine; by PKA is present on residues Ser661 and Ser663. Thr668 is subject to Phosphothreonine; by PHO85. Positions 686 to 705 (SLGVNPAADDDDDGPYADDS) are disordered. Residues 693–705 (ADDDDDGPYADDS) are compositionally biased toward acidic residues.

Belongs to the glycosyltransferase 3 family. In terms of assembly, interacts with PCL10. Phosphorylated by the cyclin-CDK PCL10-PHO85. Phosphorylation causes inactivation of enzyme.

Its subcellular location is the cytoplasm. It localises to the cytosol. The enzyme catalyses [(1-&gt;4)-alpha-D-glucosyl](n) + UDP-alpha-D-glucose = [(1-&gt;4)-alpha-D-glucosyl](n+1) + UDP + H(+). Its pathway is glycan biosynthesis; glycogen biosynthesis. Allosteric activation by glucose-6-phosphate, and phosphorylation by a cAMP-dependent kinase. Its function is as follows. Glycogen synthase participates in the glycogen biosynthetic process along with glycogenin and glycogen branching enzyme. Extends the primer composed of a few glucose units formed by glycogenin by adding new glucose units to it. In this context, glycogen synthase transfers the glycosyl residue from UDP-Glc to the non-reducing end of alpha-1,4-glucan. The polypeptide is Glycogen [starch] synthase isoform 2 (GSY2) (Saccharomyces cerevisiae (strain ATCC 204508 / S288c) (Baker's yeast)).